The chain runs to 590 residues: Transcription factor bHLH13 (590 aa).

2 disordered regions span residues 274–296 and 385–439; these read LQHH…HRQF and AASS…EAER. Over residues 281-293 the composition is skewed to low complexity; sequence QQQQQQPPQQQQH. Residues 416–425 are compositionally biased toward basic residues; sequence RPRKRGRRPA. The 50-residue stretch at 429–478 folds into the bHLH domain; it reads AEALNHVEAERQRREKLNQRFYALRSVVPNISKMDKASLLGDAVSYINEL.

In terms of assembly, homodimer.

It is found in the nucleus. This is Transcription factor bHLH13 (BHLH13) from Arabidopsis thaliana (Mouse-ear cress).